Here is a 332-residue protein sequence, read N- to C-terminus: Adenosine receptor A2b (332 aa).

At 1 to 8 (MQLETQDA) the chain is on the extracellular side. The chain crosses the membrane as a helical span at residues 9–33 (LYVALELVIAALAVAGNVLVCAAVG). At 34 to 43 (ASSALQTPTN) the chain is on the cytoplasmic side. Residues 44–67 (YFLVSLATADVAVGLFAIPFAITI) form a helical membrane-spanning segment. The Extracellular portion of the chain corresponds to 68–78 (SLGFCTDFHGC). Residues Cys78 and Cys171 are joined by a disulfide bond. The chain crosses the membrane as a helical span at residues 79–101 (LFLACFVLVLTQSSIFSLLAVAV). Residues 102–121 (DRYLAIRVPLRYKGLVTGTR) lie on the Cytoplasmic side of the membrane. A helical transmembrane segment spans residues 122-144 (ARGIIAVLWVLAFGIGLTPFLGW). Residues 145-178 (NSKDSATSNCTELGDGIANKSCCPVTCLFENVVP) are Extracellular-facing. N-linked (GlcNAc...) asparagine glycans are attached at residues Asn153 and Asn163. Position 174 (Glu174) interacts with adenosine. A helical transmembrane segment spans residues 179 to 203 (MSYMVYFNFFGCVLPPLLIMLVIYI). Residues 204-235 (KIFMVACKQLQRMELMDHSRTTLQREIHAAKS) are Cytoplasmic-facing. Residues 236–259 (LAMIVGIFALCWLPVHAINCITLF) traverse the membrane as a helical segment. Asn254 is an adenosine binding site. Over 260 to 267 (HPALAKDK) the chain is Extracellular. A helical transmembrane segment spans residues 268-291 (PKWVMNVAILLSHANSVVNPIVYA). Adenosine contacts are provided by Ser279 and His280. The Cytoplasmic portion of the chain corresponds to 292–332 (YRNRDFRYSFHKIISRYVLCQAETKGGSGQAGAQSTLSLGL). Cys311 carries the S-palmitoyl cysteine lipid modification.

The protein belongs to the G-protein coupled receptor 1 family.

Its subcellular location is the cell membrane. Functionally, receptor for adenosine. The activity of this receptor is mediated by G proteins which activate adenylyl cyclase. The protein is Adenosine receptor A2b (Adora2b) of Mus musculus (Mouse).